Consider the following 437-residue polypeptide: Palmitoyltransferase PFA4 (437 aa).

The Cytoplasmic portion of the chain corresponds to 1–12 (MAGLNDVPFIKG). Residues 13–33 (LAVPSVCALIIFLGYASQFLF) form a helical membrane-spanning segment. Over 34–48 (NYSTTLEPGPPTRRE) the chain is Lumenal. A helical membrane pass occupies residues 49–69 (TIIFNGLLLVLWITYYRTVAT). The Cytoplasmic segment spans residues 70 to 130 (DPGRYIFKDR…RNCVSMTTFP (61 aa)). The 51-residue stretch at 87–137 (RWCNKCAAPKPPRAHHCRHCARCVPRMDHHCPWTRNCVSMTTFPHFLRFLI) folds into the DHHC domain. The S-palmitoyl cysteine intermediate role is filled by Cys-117. A helical transmembrane segment spans residues 131-151 (HFLRFLIYTNMSLWMLGYFLW). Topologically, residues 152–173 (QRFSKIWEHRRLPAYLGPSFYG) are lumenal. Residues 174–194 (LICLSLISIVNFVTTVALGIM) form a helical membrane-spanning segment. Residues 195-437 (LINTVKSWVF…KILKKDGLDD (243 aa)) are Cytoplasmic-facing. The tract at residues 377 to 419 (LDQGLGWVNSDGDRLRDYGVDEEASEPEGVNDDDDDDDDDDVP) is disordered. Acidic residues predominate over residues 396-419 (VDEEASEPEGVNDDDDDDDDDDVP).

The protein belongs to the DHHC palmitoyltransferase family. PFA4 subfamily.

It localises to the endoplasmic reticulum membrane. It carries out the reaction L-cysteinyl-[protein] + hexadecanoyl-CoA = S-hexadecanoyl-L-cysteinyl-[protein] + CoA. Its function is as follows. Mediates the reversible addition of palmitate to target proteins, thereby regulating their membrane association and biological function. The sequence is that of Palmitoyltransferase PFA4 from Gibberella zeae (strain ATCC MYA-4620 / CBS 123657 / FGSC 9075 / NRRL 31084 / PH-1) (Wheat head blight fungus).